The chain runs to 841 residues: Auxin response factor 24 (841 aa).

The interval Leu109–Thr140 is disordered. The segment at residues Phe148–Met250 is a DNA-binding region (TF-B3). Disordered regions lie at residues Pro366–Arg397, Gln663–Cys715, and Gly804–Cys841. Residues Ala684–Ser695 are compositionally biased toward basic and acidic residues. Composition is skewed to polar residues over residues Lys701–Arg713 and Gly830–Cys841. Positions Arg713–Glu797 constitute a PB1 domain.

It belongs to the ARF family. In terms of assembly, homodimers and heterodimers. Expressed in roots, culms, leaves and young panicles.

The protein resides in the nucleus. In terms of biological role, auxin response factors (ARFs) are transcriptional factors that bind specifically to the DNA sequence 5'-TGTCTC-3' found in the auxin-responsive promoter elements (AuxREs). The sequence is that of Auxin response factor 24 (ARF24) from Oryza sativa subsp. japonica (Rice).